Consider the following 1212-residue polypeptide: Probable serine/threonine-protein kinase DDB_G0284491 (1212 aa).

A helical transmembrane segment spans residues 197–217 (LFHSFSLLNLYVYLIIVIRII). N-linked (GlcNAc...) asparagine glycosylation is found at N229, N299, N309, N328, N335, N341, N344, N391, N419, N422, N426, N427, N435, and N499. The tract at residues 288–329 (LNNNNDNNLNNNNSNNNLNNNNNSNSNFNNDNNLNSNINSND) is disordered. Disordered regions lie at residues 412 to 439 (GNSNSGSNNSNSSNNNSSSNSLINNSGG) and 489 to 517 (IIKNNNNNNNNNSNNNNNNNDEDDSDYEE). The segment covering 489–507 (IIKNNNNNNNNNSNNNNNN) has biased composition (low complexity). Residues 508 to 517 (NDEDDSDYEE) show a composition bias toward acidic residues. A helical membrane pass occupies residues 673–693 (IQIFDDYSLIIALRLLMNFIL). Positions 703–720 (VPPPPTQPSSRPQSPPTV) are enriched in pro residues. Disordered stretches follow at residues 703–733 (VPPPPTQPSSRPQSPPTVSPLTPLNNHHHSG) and 751–813 (EVVS…NNNN). One can recognise a Protein kinase domain in the interval 865-1182 (ETEIEPFASG…EVYNDLQDIY (318 aa)). ATP is bound by residues 871-879 (FASGGQANI) and K924. D1035 serves as the catalytic Proton acceptor.

It belongs to the protein kinase superfamily. Ser/Thr protein kinase family.

The protein localises to the membrane. It catalyses the reaction L-seryl-[protein] + ATP = O-phospho-L-seryl-[protein] + ADP + H(+). The catalysed reaction is L-threonyl-[protein] + ATP = O-phospho-L-threonyl-[protein] + ADP + H(+). This chain is Probable serine/threonine-protein kinase DDB_G0284491, found in Dictyostelium discoideum (Social amoeba).